We begin with the raw amino-acid sequence, 428 residues long: MMGKLPLGVVSPYVKMSSGGCTDPLKFYATSYCTAYGREDFKPRVGSHRGTGYKSNYRPVVFYQPHLDALDNTATGEQGCNNFQTVTSQSYRPLEVPDGTHPLPWNLHQTNSGYSREKASAVTPIKEVRKVHFDTQDYGPQAITGLEPKDAPLLHQQQNKGSLEWENAGHGPRFMTSEYNSKYLKEPSHQPDLLQKNSVGAKEETGFTEESNKNPIVFQPPSQALPGDPVLLPGRSVTKSDFLPISHPHGDEFLPVLARGSERETGFSRVNERTLNPRVPPPCPEPSSMNHWQFQSPQRMQQTNVALLGRETVGNKEPSGFSLNNPSYVRSPYDPDMDNRYLTTYNQGYFENIPKGLDREGWTRGGLQPQKPGGYALNQPVTRLEATPTPTESLRRLHPHLGRTLISVDPFYRTAPPSGHVSRFTAPN.

The tract at residues 201 to 231 is disordered; the sequence is AKEETGFTEESNKNPIVFQPPSQALPGDPVL.

Microtubule inner protein component of sperm flagellar doublet microtubules. Interacts with PPP1CA.

It localises to the cell projection. Its subcellular location is the cilium. It is found in the cytoplasm. The protein resides in the cytoskeleton. The protein localises to the flagellum axoneme. The polypeptide is Stabilizer of axonemal microtubules 4 (Bos taurus (Bovine)).